A 195-amino-acid polypeptide reads, in one-letter code: MMAIRELKVCLLGDTGVGKSSIVCRFVQDHFDHNISPTIGASFMTKTVPCGNELHKFLIWDTAGQERFHSLAPMYYRGSAAAVIVYDITKQDSFYTLKKWVKELKEHGPENIVMAIAGNKCDLSDIREVPLKDAKEYAESIGAIVVETSAKNAINIEELFQGISRQIPPLDPHENGNNGTIKVEKPTMQASRRCC.

GTP contacts are provided by G16, G18, K19, S20, S21, D32, and H33. Residue S20 coordinates Mg(2+). 2 short sequence motifs (switch) span residues 30–42 and 63–79; these read HFDH…IGAS and AGQE…YRGS. S36 is subject to Phosphoserine. GTP-binding residues include T38, G64, N119, D122, A150, and K151. T38 lines the Mg(2+) pocket. 2 S-geranylgeranyl cysteine lipidation sites follow: C194 and C195.

It belongs to the small GTPase superfamily. Rab family. In terms of assembly, interacts with OCRL. Interacts with NGFR. Interacts (in GDP-bound form) with RIN3 and GAPVD1, which function as guanine exchange factors (GEF). Interacts (in GTP-bound form) with EEA1. Interacts with EGFR. Interacts (in GTP-bound form) with APPL2; interaction contributes to or enhances recruitment of APPL2 to the phagosomes; interaction enhances Fc-gamma receptor-mediated phagocytosis through PI3K/Akt signaling in macrophages. It depends on Mg(2+) as a cofactor. In terms of tissue distribution, highest expression in placenta and brain with lower levels in heart and lung. Not detected in liver, skeletal muscle, kidney or pancreas.

The protein resides in the golgi apparatus. The protein localises to the trans-Golgi network. Its subcellular location is the trans-Golgi network membrane. It is found in the early endosome. It localises to the cytoplasmic vesicle. The protein resides in the phagosome. The protein localises to the phagosome membrane. The enzyme catalyses GTP + H2O = GDP + phosphate + H(+). With respect to regulation, regulated by guanine nucleotide exchange factors (GEFs) including RIN3 and GAPVD1 which promote the exchange of bound GDP for free GTP. Regulated by GTPase activating proteins (GAPs) which increase the GTP hydrolysis activity. Inhibited by GDP dissociation inhibitors (GDIs) which prevent Rab-GDP dissociation. The small GTPases Rab are key regulators of intracellular membrane trafficking, from the formation of transport vesicles to their fusion with membranes. Rabs cycle between an inactive GDP-bound form and an active GTP-bound form that is able to recruit to membranes different set of downstream effectors directly responsible for vesicle formation, movement, tethering and fusion. Required for the integrity and for normal function of the Golgi apparatus and the trans-Golgi network. Plays a role in insulin-stimulated translocation of GLUT4 to the cell membrane. Plays a role in M6PR transport from the trans-Golgi network to endosomes. Plays a role in the internalization of EGFR from the cell membrane into endosomes. Plays a role in the maturation of phagosomes that engulf pathogens, such as S.aureus and M.tuberculosis. This chain is Ras-related protein Rab-31, found in Homo sapiens (Human).